Here is a 287-residue protein sequence, read N- to C-terminus: Putative daunorubicin C-13 ketoreductase DnrU (287 aa).

24-30 provides a ligand contact to NADP(+); sequence GATSGIG. A substrate-binding site is contributed by S149. The active-site Proton acceptor is Y175.

The protein belongs to the short-chain dehydrogenases/reductases (SDR) family.

In terms of biological role, could reduce the 13-carbonyl of daunorubicin to produce (13S)-13-dihydrodaunorubicin. Could also be able to reduce the 13-carbonyl of doxorubicin. This is Putative daunorubicin C-13 ketoreductase DnrU from Streptomyces sp. (strain C5).